The chain runs to 74 residues: MDSEVQRDGRILDLIDDAWREDKLPYEDVAIPLSELPEPEQDNGGTTESVKEQEMKWTDLALQGLHENVPPAGN.

The disordered stretch occupies residues 33–56 (LSELPEPEQDNGGTTESVKEQEMK).

The protein belongs to the APC13 family. In terms of assembly, the mammalian APC/C is composed at least of 14 distinct subunits ANAPC1, ANAPC2, CDC27/APC3, ANAPC4, ANAPC5, CDC16/APC6, ANAPC7, CDC23/APC8, ANAPC10, ANAPC11, CDC26/APC12, ANAPC13, ANAPC15 and ANAPC16 that assemble into a complex of at least 19 chains with a combined molecular mass of around 1.2 MDa; APC/C interacts with FZR1 and FBXO5.

The protein localises to the nucleus. The protein operates within protein modification; protein ubiquitination. Component of the anaphase promoting complex/cyclosome (APC/C), a cell cycle-regulated E3 ubiquitin ligase that controls progression through mitosis and the G1 phase of the cell cycle. The APC/C complex acts by mediating ubiquitination and subsequent degradation of target proteins: it mainly mediates the formation of 'Lys-11'-linked polyubiquitin chains and, to a lower extent, the formation of 'Lys-48'- and 'Lys-63'-linked polyubiquitin chains. The APC/C complex catalyzes assembly of branched 'Lys-11'-/'Lys-48'-linked branched ubiquitin chains on target proteins. The sequence is that of Anaphase-promoting complex subunit 13 (Anapc13) from Mus musculus (Mouse).